A 423-amino-acid chain; its full sequence is MKAQPPLRLTSQAMAFVLAGGRGSRLKELTDRRAKPAVYFGGKARIIDFALSNAMNSGIRKMAIATQYKAHSLIRHIQRGWNFFREERNEYLDILPASQRVDEHKWYLGTADAVTQNIDIVDSYDIKYVIILAGDHVYKMDYEIMLRQHCETGADVTIGCLTVPRMEATAFGVMHVDASLRITDFLEKPADPPGIPGDEGNALASMGIYVFDWAFLRDLLIRDAEDPNSSHDFGHDLIPAIVRNGKAMAHRFSDSCVMTGLETEPYWRDVGTIDAFWQANIDLTDFTPKLDLYDREWPIWTYSQIVPPAKFIHDSERRRGMAISSLVSGDCIVSGSEIRSSLLFTGCRTHSYSSLSHVVALPHVTVNRKADLTNCVLDRGVVIPEGLVIGQEPEEDARWFRRSEGGIVLVTQDMLDARARALG.

Residues Y107, G172, 187 to 188, and S205 each bind alpha-D-glucose 1-phosphate; that span reads EK.

This sequence belongs to the bacterial/plant glucose-1-phosphate adenylyltransferase family. As to quaternary structure, homotetramer.

It catalyses the reaction alpha-D-glucose 1-phosphate + ATP + H(+) = ADP-alpha-D-glucose + diphosphate. It functions in the pathway glycan biosynthesis; glycogen biosynthesis. In terms of biological role, involved in the biosynthesis of ADP-glucose, a building block required for the elongation reactions to produce glycogen. Catalyzes the reaction between ATP and alpha-D-glucose 1-phosphate (G1P) to produce pyrophosphate and ADP-Glc. This chain is Glucose-1-phosphate adenylyltransferase, found in Cereibacter sphaeroides (strain ATCC 17025 / ATH 2.4.3) (Rhodobacter sphaeroides).